A 555-amino-acid chain; its full sequence is Genome polyprotein (555 aa).

Residues 1–7 (KHAQRIE) are Extracellular-facing. Residues 8–28 (TWILRHPGFTIMAAILAYTIG) form a helical membrane-spanning segment. The Cytoplasmic segment spans residues 29-34 (TTHFQR). The helical transmembrane segment at 35 to 49 (ALIFILLTAVAPSMT) threads the bilayer. Residues 50–494 (MRCIGISNRD…LHQVFGAIYG (445 aa)) lie on the Extracellular side of the membrane. 4 disulfides stabilise this stretch: cysteine 52/cysteine 79, cysteine 109/cysteine 170, cysteine 123/cysteine 154, and cysteine 141/cysteine 165. A glycan (N-linked (GlcNAc...) asparagine; by host) is linked at asparagine 116. The fusion peptide stretch occupies residues 147–160 (DRGWGNGCGLFGKG). Asparagine 202 is a glycosylation site (N-linked (GlcNAc...) asparagine; by host). Disulfide bonds link cysteine 234/cysteine 334 and cysteine 351/cysteine 382. A helical membrane pass occupies residues 495-515 (AAFSGVSWTMKILIGVIITWI). Over 516–521 (GMNSRS) the chain is Cytoplasmic. The chain crosses the membrane as a helical span at residues 522–542 (TSLSVSLVLVGIVTLYLEVMV). Residues 543 to 555 (QADSGCVVSWKNK) lie on the Extracellular side of the membrane.

Homodimer; in the endoplasmic reticulum and Golgi. Interacts with protein prM. Interacts with non-structural protein 1. In terms of assembly, homodimer; Homohexamer when secreted. Interacts with envelope protein E. In terms of processing, N-glycosylated. N-glycosylated. The excreted form is glycosylated and this is required for efficient secretion of the protein from infected cells. Post-translationally, specific enzymatic cleavages in vivo yield mature proteins. Cleavages in the lumen of endoplasmic reticulum are performed by host signal peptidase, wereas cleavages in the cytoplasmic side are performed by serine protease NS3. Signal cleavage at the 2K-4B site requires a prior NS3 protease-mediated cleavage at the 4A-2K site.

Its subcellular location is the virion membrane. It is found in the host endoplasmic reticulum membrane. The protein resides in the secreted. May play a role in virus budding. Exerts cytotoxic effects by activating a mitochondrial apoptotic pathway through M ectodomain. May display a viroporin activity. Its function is as follows. Binds to host cell surface receptor and mediates fusion between viral and cellular membranes. Envelope protein is synthesized in the endoplasmic reticulum in the form of heterodimer with protein prM. They play a role in virion budding in the ER, and the newly formed immature particle is covered with 60 spikes composed of heterodimer between precursor prM and envelope protein E. The virion is transported to the Golgi apparatus where the low pH causes dissociation of PrM-E heterodimers and formation of E homodimers. prM-E cleavage is inefficient, and many virions are only partially matured. These uncleaved prM would play a role in immune evasion. Functionally, involved in immune evasion, pathogenesis and viral replication. Once cleaved off the polyprotein, is targeted to three destinations: the viral replication cycle, the plasma membrane and the extracellular compartment. Essential for viral replication. Required for formation of the replication complex and recruitment of other non-structural proteins to the ER-derived membrane structures. Excreted as a hexameric lipoparticle that plays a role against host immune response. Antagonizing the complement function. Binds to the host macrophages and dendritic cells. Inhibits signal transduction originating from Toll-like receptor 3 (TLR3). In terms of biological role, disrupts the host endothelial glycocalyx layer of host pulmonary microvascular endothelial cells, inducing degradation of sialic acid and shedding of heparan sulfate proteoglycans. NS1 induces expression of sialidases, heparanase, and activates cathepsin L, which activates heparanase via enzymatic cleavage. These effects are probably linked to the endothelial hyperpermeability observed in severe dengue disease. The protein is Genome polyprotein of Dengue virus type 2 (strain Thailand/TH-36/1958) (DENV-2).